The primary structure comprises 113 residues: Large ribosomal subunit protein P1 (113 aa).

A compositionally biased stretch (low complexity) spans 56 to 66; the sequence is TAAAAPAPAAG. The segment at 56–113 is disordered; the sequence is TAAAAPAPAAGGSAGGEVEAADDDDEEDAEEEAADEGGDDDGDDDEEADGEGLGALFG. Residues 74–105 are compositionally biased toward acidic residues; it reads EAADDDDEEDAEEEAADEGGDDDGDDDEEADG.

The protein belongs to the eukaryotic ribosomal protein P1/P2 family. Part of the 50S ribosomal subunit. Homodimer, it forms part of the ribosomal stalk which helps the ribosome interact with GTP-bound translation factors. Forms a heptameric uL10/P0(P1)2(P1)2(P1)2 complex, where uL10/P0 forms an elongated spine to which the P1 dimers bind in a sequential fashion.

Its function is as follows. Forms part of the ribosomal stalk, playing a central role in the interaction of the ribosome with GTP-bound translation factors. The sequence is that of Large ribosomal subunit protein P1 from Haloferax volcanii (strain ATCC 29605 / DSM 3757 / JCM 8879 / NBRC 14742 / NCIMB 2012 / VKM B-1768 / DS2) (Halobacterium volcanii).